We begin with the raw amino-acid sequence, 82 residues long: uncharacterized protein (82 aa).

A compositionally biased stretch (basic and acidic residues) spans 1 to 11; sequence MKARGSRENAS. The tract at residues 1–25 is disordered; the sequence is MKARGSRENASKRRPSQTQYDTHLR. Residues 16–25 show a composition bias toward polar residues; sequence SQTQYDTHLR.

This is an uncharacterized protein from Human cytomegalovirus (strain AD169) (HHV-5).